Reading from the N-terminus, the 213-residue chain is MIVEHAIDYIDYLMNYVDFTEKYFLLTIACVVFNPTWWNITARMEYKTKFMTKICGSKENGCYLLAFLIFSLGILRDWLFSEALIRQPIFQEFDRFEVEVLSYILYGFGGILVLAAYLKLGITGTYLGDYFGILMKERVTGFPFNVMNNPMYNGSVMLFIAHALSYKSVAGLVLSFVVYVVYKFALIFEESFTNYIYSTAAANAAKKNKSKSK.

Residues Met1–Glu21 lie on the Lumenal side of the membrane. The helical intramembrane region spans Lys22–Ala42. Residues Arg43–Ile54 lie on the Lumenal side of the membrane. The chain crosses the membrane as a helical span at residues Cys55 to Leu75. Residues Arg76 to Ser102 lie on the Cytoplasmic side of the membrane. The helical transmembrane segment at Tyr103–Thr123 threads the bilayer. Gly107–Gly109 lines the S-adenosyl-L-methionine pocket. The Lumenal portion of the chain corresponds to Gly124–Tyr166. The helical transmembrane segment at Lys167 to Ile187 threads the bilayer. Residues Phe188–Lys213 lie on the Cytoplasmic side of the membrane. Glu189–Glu190 contacts S-adenosyl-L-methionine.

This sequence belongs to the class VI-like SAM-binding methyltransferase superfamily. PEMT/PEM2 methyltransferase family.

It is found in the endoplasmic reticulum membrane. The protein resides in the mitochondrion membrane. It catalyses the reaction a 1,2-diacyl-sn-glycero-3-phospho-N-methylethanolamine + S-adenosyl-L-methionine = a 1,2-diacyl-sn-glycero-3-phospho-N,N-dimethylethanolamine + S-adenosyl-L-homocysteine + H(+). The catalysed reaction is a 1,2-diacyl-sn-glycero-3-phospho-N,N-dimethylethanolamine + S-adenosyl-L-methionine = a 1,2-diacyl-sn-glycero-3-phosphocholine + S-adenosyl-L-homocysteine + H(+). The enzyme catalyses a 1,2-diacyl-sn-glycero-3-phosphoethanolamine + S-adenosyl-L-methionine = a 1,2-diacyl-sn-glycero-3-phospho-N-methylethanolamine + S-adenosyl-L-homocysteine + H(+). The protein operates within phospholipid metabolism; phosphatidylcholine biosynthesis. Functionally, catalyzes the three sequential steps of the methylation pathway of phosphatidylcholine biosynthesis, the SAM-dependent methylation of phosphatidylethanolamine (PE) to phosphatidylmonomethylethanolamine (PMME), PMME to phosphatidyldimethylethanolamine (PDME), and PDME to phosphatidylcholine (PC). In Dictyostelium discoideum (Social amoeba), this protein is Phosphatidylethanolamine N-methyltransferase A (pemtA).